The following is a 1269-amino-acid chain: Phospholipase D A (1269 aa).

A compositionally biased stretch (polar residues) spans 55-64 (YTSVGSAPTT). A disordered region spans residues 55 to 121 (YTSVGSAPTT…NNNLQSPTQS (67 aa)). Low complexity-rich tracts occupy residues 65–87 (NNNS…SGSS) and 95–114 (NSNK…NNNN). Residues 131 to 192 (SKALHDFEEK…ELKSLDELLH (62 aa)) are a coiled coil. The span at 222–232 (NSVTNNTPSSA) shows a compositional bias: polar residues. Disordered stretches follow at residues 222-269 (NSVT…SSST) and 300-320 (NSYP…DPNL). A compositionally biased stretch (low complexity) spans 233-269 (TPLTLSNNNNYTSSSLATSPTTNSSSSSSSSSSSSST). 2 consecutive PLD phosphodiesterase domains span residues 435–462 (IYWS…CFGR) and 704–731 (EQIY…NDRS). Residues histidine 440, lysine 442, aspartate 447, histidine 709, lysine 711, and aspartate 716 contribute to the active site. A coiled-coil region spans residues 803–835 (NNNNNSNINNNINNNNNEINNNNNNNNNNNSNE). Low complexity-rich tracts occupy residues 810 to 850 (INNN…NSNS), 859 to 906 (NLPP…GTTN), and 934 to 943 (SSPQDSPQDS). Disordered stretches follow at residues 810-966 (INNN…HQSP) and 983-1007 (SNEQ…TTTD). Residues 987–1003 (LPPPPSSTTPPPPPPPL) are compositionally biased toward pro residues. Residues 1059–1096 (TTAQQQQQQQQQQQQQQQQQQQQQQQQQQQQQQQQQQQ) adopt a coiled-coil conformation. Residues 1116–1167 (IKKKRSSISPSTSSNKLLLSGNGSGDSIRVVTDSGSSPRGQPRSMSSLHDHA) form a disordered region. The segment covering 1122 to 1142 (SISPSTSSNKLLLSGNGSGDS) has biased composition (low complexity). Residues 1148–1162 (DSGSSPRGQPRSMSS) are compositionally biased toward polar residues.

The protein belongs to the phospholipase D family.

The catalysed reaction is a 1,2-diacyl-sn-glycero-3-phosphocholine + H2O = a 1,2-diacyl-sn-glycero-3-phosphate + choline + H(+). Its activity is regulated as follows. Inhibited by butan-1-ol. Plays a role in cell growth. Hydrolyzes membrane phospholipids, such as PtdCho free headgroup and PtdOH (phosphatidic acid; signaling molecule on its own). Involved in the inhibition of actin-based motility and endocytosis. Its inhibition causes complete collapse of F-actin organization. The protein is Phospholipase D A (pldA) of Dictyostelium discoideum (Social amoeba).